The primary structure comprises 145 residues: D-aminoacyl-tRNA deacylase (145 aa).

The Gly-cisPro motif, important for rejection of L-amino acids motif lies at 137 to 138 (GP).

This sequence belongs to the DTD family. As to quaternary structure, homodimer.

Its subcellular location is the cytoplasm. It carries out the reaction glycyl-tRNA(Ala) + H2O = tRNA(Ala) + glycine + H(+). It catalyses the reaction a D-aminoacyl-tRNA + H2O = a tRNA + a D-alpha-amino acid + H(+). Functionally, an aminoacyl-tRNA editing enzyme that deacylates mischarged D-aminoacyl-tRNAs. Also deacylates mischarged glycyl-tRNA(Ala), protecting cells against glycine mischarging by AlaRS. Acts via tRNA-based rather than protein-based catalysis; rejects L-amino acids rather than detecting D-amino acids in the active site. By recycling D-aminoacyl-tRNA to D-amino acids and free tRNA molecules, this enzyme counteracts the toxicity associated with the formation of D-aminoacyl-tRNA entities in vivo and helps enforce protein L-homochirality. This Yersinia pestis bv. Antiqua (strain Antiqua) protein is D-aminoacyl-tRNA deacylase.